A 131-amino-acid chain; its full sequence is MSAKTDEILESLKSLSLLEASELVKQIEEAFGVSAAASAGVVMAAPGAAAGGGGGEVAEEKTEFDVILESFDAAAKIKVLKAVRNATGLGLGDAKALVEAAPKPIKEGISKDEAEALKKEIEEVGGKVTLK.

Belongs to the bacterial ribosomal protein bL12 family. As to quaternary structure, homodimer. Part of the ribosomal stalk of the 50S ribosomal subunit. Forms a multimeric L10(L12)X complex, where L10 forms an elongated spine to which 2 to 4 L12 dimers bind in a sequential fashion. Binds GTP-bound translation factors.

Functionally, forms part of the ribosomal stalk which helps the ribosome interact with GTP-bound translation factors. Is thus essential for accurate translation. The chain is Large ribosomal subunit protein bL12 from Parasynechococcus marenigrum (strain WH8102).